Reading from the N-terminus, the 2115-residue chain is Nuclear mitotic apparatus protein 1 (2115 aa).

Residues 1–212 are head (Globular); it reads MTLHATRGAA…SPMGDILQTP (212 aa). Ser-162 bears the Phosphoserine mark. Residue Thr-163 is modified to Phosphothreonine. A phosphoserine mark is found at Ser-169 and Ser-203. Thr-211 is modified (phosphothreonine). Positions 213 to 1699 form a coiled coil; that stretch reads QFQMRRLKKQ…ADQQLRDLGK (1487 aa). Position 271 is a phosphoserine (Ser-271). Position 379 is an N6-acetyllysine (Lys-379). A phosphoserine mark is found at Ser-388 and Ser-395. A compositionally biased stretch (low complexity) spans 549–560; the sequence is LRHQVEQLSSSL. 2 disordered regions span residues 549–593 and 746–766; these read LRHQ…EERE and LVEQHKRERKELEEERAGRKG. The span at 561 to 581 shows a compositional bias: basic and acidic residues; the sequence is KQKEQQLKEVAEKQEATRQDH. At Ser-820 the chain carries Phosphoserine. N6-acetyllysine is present on Lys-891. 2 stretches are compositionally biased toward basic and acidic residues: residues 926 to 950 and 996 to 1013; these read AGEQQETASRELVKEPARAGDRQPE and QEERGQQEREVARLTQER. Disordered stretches follow at residues 926–958 and 988–1013; these read AGEQQETASRELVKEPARAGDRQPEWLEEQQGR and LMESQGQQQEERGQQEREVARLTQER. Thr-1047 bears the Phosphothreonine; by PLK1 mark. The span at 1090–1102 shows a compositional bias: basic and acidic residues; sequence LKEQLAKKEKEHA. 2 disordered regions span residues 1090 to 1225 and 1275 to 1296; these read LKEQ…RKNS and ETASNSARAAERSSALREEVQS. 2 stretches are compositionally biased toward low complexity: residues 1103–1112 and 1133–1142; these read SGSGAQSEAA and EQQCQKQQEQ. Residues 1145-1163 show a composition bias toward basic and acidic residues; sequence SLERSLEAERASRAERDSA. Ser-1187 is subject to Phosphoserine. The span at 1198–1224 shows a compositional bias: basic and acidic residues; that stretch reads KVQDHSKAEDEWKAQVARGRQEAERKN. Ser-1225 bears the Phosphoserine mark. Residues 1283 to 1296 are compositionally biased toward basic and acidic residues; the sequence is AAERSSALREEVQS. Residue Lys-1511 is modified to N6-acetyllysine. Phosphoserine is present on Ser-1601. Lys-1699 participates in a covalent cross-link: Glycyl lysine isopeptide (Lys-Gly) (interchain with G-Cter in SUMO2). Residues 1699-1876 form a membrane-binding domain 1 region; sequence KFQVATDALK…NSALLSLPGY (178 aa). The tract at residues 1700–2115 is tail (Globular); it reads FQVATDALKS…TPRAKGKAKH (416 aa). Ser-1721, Ser-1724, and Ser-1728 each carry phosphoserine. A disordered region spans residues 1734-1761; it reads PLSITSKLPRTQPDGTSVPGEPASPISQ. The span at 1735–1748 shows a compositional bias: polar residues; the sequence is LSITSKLPRTQPDG. Positions 1742 to 1748 match the Tankyrase-binding domain motif; that stretch reads PRTQPDG. A phosphoserine mark is found at Ser-1757 and Ser-1760. Lys-1766 is covalently cross-linked (Glycyl lysine isopeptide (Lys-Gly) (interchain with G-Cter in SUMO1); alternate). Lys-1766 participates in a covalent cross-link: Glycyl lysine isopeptide (Lys-Gly) (interchain with G-Cter in SUMO2); alternate. Ser-1769 and Ser-1772 each carry phosphoserine; by PLK1. The residue at position 1774 (Tyr-1774) is a Phosphotyrosine. Thr-1776 is subject to Phosphothreonine. Ser-1788 carries the phosphoserine modification. Residues 1788-1810 are 4.1-binding domain; it reads SSLDSLGDVFLDSGRKTRSARRR. Ser-1789 bears the Phosphoserine; by PLK1 mark. Phosphoserine occurs at positions 1792 and 1800. Thr-1804 is subject to Phosphothreonine. Lys-1822 participates in a covalent cross-link: Glycyl lysine isopeptide (Lys-Gly) (interchain with G-Cter in SUMO2). Disordered stretches follow at residues 1826-1901 and 1955-2115; these read EEPD…GRNS and EMKT…KAKH. A phosphoserine mark is found at Ser-1830 and Ser-1833. The segment covering 1830–1857 has biased composition (polar residues); that stretch reads SANSSFYSTRSAPASQASLRATSSTQSL. Ser-1834 bears the Phosphoserine; by PLK1 mark. Tyr-1836 is modified (phosphotyrosine). Ser-1840 bears the Phosphoserine mark. The residue at position 1844 (Ser-1844) is a Phosphoserine; alternate. Ser-1844 carries O-linked (GlcNAc) serine; alternate glycosylation. Ser-1862 and Ser-1887 each carry phosphoserine. The segment covering 1879-1891 has biased composition (polar residues); sequence TTRSSARRSQAGV. Residues 1882–1985 form a tubulin-binding domain region; sequence SSARRSQAGV…AEGTGITTRQ (104 aa). The segment at 1892–1926 is GPSM2-binding domain; that stretch reads SSGAPPGRNSFYMGTCQDEPEQLDDWNRIAELQQR. Residues 1955-1966 are compositionally biased toward basic and acidic residues; that stretch reads EMKTGDPQETLR. Ser-1969 is subject to Phosphoserine. The interval 1981–2060 is membrane-binding domain 2; that stretch reads ITTRQQRKRV…SILNTPKKLG (80 aa). Positions 1984–1989 match the Nuclear localization signal motif; it reads RQQRKR. Ser-1991 bears the Phosphoserine mark. Thr-2000 is subject to Phosphothreonine. At Ser-2003 the chain carries Phosphoserine. At Thr-2015 the chain carries Phosphothreonine; by CDK1. A compositionally biased stretch (basic and acidic residues) spans 2015–2032; sequence TPRDRHEGRKQSTTEAQK. The residue at position 2047 (Ser-2047) is a Phosphoserine. Thr-2055 carries the post-translational modification Phosphothreonine; by CDK1. A phosphoserine mark is found at Ser-2062 and Ser-2077. Ser-2087 is subject to Phosphoserine; by CDK1. The span at 2089 to 2108 shows a compositional bias: low complexity; it reads RIATTTASAATAAAIGATPR. A Phosphothreonine; by CDK1 modification is found at Thr-2106.

As to quaternary structure, homodimer. Also forms multiarm oligomers by association of C-terminal tail domains, oligomers may further assemble to form a hexagonal nuclear lattice-like network. Associates with the dynein-dynactin complex; this association promotes the transport and accumulation of NUMA1 at the mitotic spindle poles that is inhibited by the BRISC complex in a PLK1-dependent manner. Part of a spindle orientation complex at least composed of GNAI1, GPSM2 and NUMA1. Interacts (via C-terminus) with microtubules (MTs); this interaction is direct and promotes both MT bundle formation and stability in a dynein-dynactin complex- and CDK1-independent manner. Interacts with EPB41 and EPB41L2; these interactions are negatively regulated by CDK1 during metaphase and are important for anaphase-specific localization of NUMA1 in symmetrically dividing cells. Interacts (via C-terminus) with GPSM2 (via TPR repeats); this interaction is direct, prevented by competitive binding of INSC, is inhibited in a PLK1-dependent manner, blocks the association of NUMA1 with MTs and inhibits NUMA1-induced MT bundle formation, prevents the association of NUMA1 with SPAG5, induces mitotic spindle pole localization of GPSM2, both metaphase cell cortex localization of NUMA1 and mitotic spindle organization. Does not interact with GPSM2 during anaphase. Interacts (via C-terminus) with the nuclear importin alpha/importin beta receptor; this interaction is inhibited by RanGTP. Interacts (via C-terminus) with KPNB1; this interaction is inhibited by RanGTP and the BRISC complex. Interacts with ABRAXAS2 and the BRISC complex; these interactions regulate mitotic spindle assembly. Interacts (via N-terminal end of the coiled-coil domain) with RAE1; this interaction promotes mitotic spindle formation. Interacts (via C-terminus) with SPAG5 (via C-terminus); this interaction promotes the recruitment of SPAG5 to the MTs at spindle poles in a dynein-dynactin-dependent manner and regulates mitotic spindle organization and proper chromosome alignment during mitosis. Interacts with TNKS; this interaction occurs at the onset of mitosis. Interacts with TNKS2. Interacts with tubulin. Interacts with KHDC3L (via C-terminus). Phosphorylation and dephosphorylation on Thr-2055 regulates the extent of cortical NUMA1 and the dynein-dynactin complex localization during mitotic metaphase and anaphase. In metaphase, phosphorylation on Thr-2055 occurs in a kinase CDK1-dependent manner; this phosphorylation maintains low levels of cortical dynein-dynactin complex at metaphase, and hence proper spindle positioning. In anaphase, dephosphorylated on Thr-2055 by phosphatase PPP2CA; this dephosphorylation stimulates its membrane association and with the dynein-dynactin complex its enrichment at the cell cortex, and hence robust spindle elongation. Probably also phosphorylated on Thr-2015 and Ser-2087 by CDK1; these phosphorylations may regulate its cell cortex recruitment during metaphase and anaphase. Phosphorylated on Thr-1047, Ser-1769, Ser-1772, Ser-1789 and Ser-1834 by PLK1; these phosphorylations induce cortical dynein-dynactin complex dissociation from the NUMA1-GPSM2 complex and negatively regulates cortical dynein-dynactin complex localization. In terms of processing, ADP-ribosylated by TNKS at the onset of mitosis; ADP-ribosylation is not required for its localization to spindle poles. Post-translationally, O-glycosylated during cytokinesis at sites identical or close to phosphorylation sites, this interferes with the phosphorylation status. Ubiquitinated with 'Lys-63'-linked polyubiquitin chains. Deubiquitination by the BRISC complex is important for the incorporation of NUMA1 into mitotic spindle poles and normal spindle pole function, probably by modulating interactions between NUMA1, dynein-dynactin complex and importin-beta.

It is found in the nucleus. The protein localises to the nucleoplasm. Its subcellular location is the nucleus matrix. The protein resides in the chromosome. It localises to the cytoplasm. It is found in the cytoskeleton. The protein localises to the microtubule organizing center. Its subcellular location is the centrosome. The protein resides in the spindle pole. It localises to the cell cortex. It is found in the cell membrane. The protein localises to the lateral cell membrane. Its subcellular location is the cytosol. Its function is as follows. Microtubule (MT)-binding protein that plays a role in the formation and maintenance of the spindle poles and the alignement and the segregation of chromosomes during mitotic cell division. Functions to tether the minus ends of MTs at the spindle poles, which is critical for the establishment and maintenance of the spindle poles. Plays a role in the establishment of the mitotic spindle orientation during metaphase and elongation during anaphase in a dynein-dynactin-dependent manner. In metaphase, part of a ternary complex composed of GPSM2 and G(i) alpha proteins, that regulates the recruitment and anchorage of the dynein-dynactin complex in the mitotic cell cortex regions situated above the two spindle poles, and hence regulates the correct oritentation of the mitotic spindle. During anaphase, mediates the recruitment and accumulation of the dynein-dynactin complex at the cell membrane of the polar cortical region through direct association with phosphatidylinositol 4,5-bisphosphate (PI(4,5)P2), and hence participates in the regulation of the spindle elongation and chromosome segregation. Also binds to other polyanionic phosphoinositides, such as phosphatidylinositol 3-phosphate (PIP), lysophosphatidic acid (LPA) and phosphatidylinositol triphosphate (PIP3), in vitro. Also required for proper orientation of the mitotic spindle during asymmetric cell divisions. Plays a role in mitotic MT aster assembly. Involved in anastral spindle assembly. Positively regulates TNKS protein localization to spindle poles in mitosis. Highly abundant component of the nuclear matrix where it may serve a non-mitotic structural role, occupies the majority of the nuclear volume. Required for epidermal differentiation and hair follicle morphogenesis. In Homo sapiens (Human), this protein is Nuclear mitotic apparatus protein 1.